Here is a 274-residue protein sequence, read N- to C-terminus: Kit ligand (274 aa).

The N-terminal stretch at 1–25 (MKKTQTWIVTCIYLQLLLFNPLVKT) is a signal peptide. Over 26–215 (KGLCRNRVTD…TNPIEDSSIQ (190 aa)) the chain is Extracellular. 2 disulfide bridges follow: Cys-29–Cys-114 and Cys-68–Cys-164. N-linked (GlcNAc...) asparagine glycosylation is found at Asn-90, Asn-97, Asn-145, and Asn-196. The helical transmembrane segment at 216–238 (WAVMALPACFSLVIGFAFGAFYW) threads the bilayer. Topologically, residues 239–274 (KKKQPNLTRTVENIQINEEDNEISMLQEKEREFQEV) are cytoplasmic.

The protein belongs to the SCF family. As to quaternary structure, homodimer, non-covalently linked. A soluble form is produced by proteolytic processing of isoform 1 in the extracellular domain.

It is found in the cell membrane. Its subcellular location is the secreted. The protein resides in the cytoplasm. It localises to the cytoskeleton. The protein localises to the cell projection. It is found in the lamellipodium. Its subcellular location is the filopodium. Its function is as follows. Stimulates the proliferation of mast cells. Able to augment the proliferation of both myeloid and lymphoid hematopoietic progenitors in bone marrow culture. Also mediates cell-cell adhesion. Acts synergistically with other cytokines, probably interleukins. In Felis catus (Cat), this protein is Kit ligand (KITLG).